Here is a 635-residue protein sequence, read N- to C-terminus: Signal recognition particle subunit SRP72 (635 aa).

TPR repeat units follow at residues glycine 7–glutamate 42, glycine 75–aspartate 105, valine 106–aspartate 139, tyrosine 171–serine 204, aspartate 220–aspartate 253, serine 255–lysine 290, and valine 436–leucine 469. The interval lysine 539–phenylalanine 635 is disordered. A compositionally biased stretch (basic and acidic residues) spans aspartate 557 to threonine 569. The span at lysine 625 to phenylalanine 635 shows a compositional bias: basic residues.

The protein belongs to the SRP72 family. As to quaternary structure, heterodimer with srpa-68. Srpa-68-srpa-72 heterodimer formation is stabilized by the presence of 7SL RNA. Component of a signal recognition particle (SRP) complex that consists of a 7SL RNA molecule of 300 nucleotides and six protein subunits: srpa-72, srpa-68, SRP54, F37F2.2/SRP19, F25G6.8/SRP14 and ZK512.4/SRP9. Within the SRP complex, interacts (via N-terminus) with srpa-68 (via C-terminus).

It localises to the cytoplasm. It is found in the endoplasmic reticulum. In terms of biological role, component of the signal recognition particle (SRP) complex, a ribonucleoprotein complex that mediates the cotranslational targeting of secretory and membrane proteins to the endoplasmic reticulum (ER). The SRP complex interacts with the signal sequence in nascent secretory and membrane proteins and directs them to the membrane of the ER. The SRP complex targets the ribosome-nascent chain complex to the SRP receptor (SR), which is anchored in the ER, where SR compaction and GTPase rearrangement drive cotranslational protein translocation into the ER. Binds the signal recognition particle RNA (7SL RNA) in presence of srpa-68. Can bind 7SL RNA with low affinity. The SRP complex possibly participates in the elongation arrest function. This chain is Signal recognition particle subunit SRP72, found in Caenorhabditis elegans.